The primary structure comprises 586 residues: Dolichyl-diphosphooligosaccharide--protein glycosyltransferase subunit 1 (586 aa).

The first 15 residues, 1–15, serve as a signal peptide directing secretion; that stretch reads MRLLFAIALLGAVFA. Residues 16-421 are Lumenal-facing; sequence EDAWKAANVD…EFEFVDMLRE (406 aa). A helical membrane pass occupies residues 422-442; sequence PLLASAFFFSLFFVIIVYSRF. The Cytoplasmic segment spans residues 443–586; sequence DFTISSDPAK…NRADSVLASI (144 aa).

Belongs to the OST1 family. Component of the oligosaccharyltransferase (OST) complex.

It localises to the endoplasmic reticulum membrane. The protein resides in the cytoplasmic granule. It functions in the pathway protein modification; protein glycosylation. Subunit of the oligosaccharyl transferase (OST) complex that catalyzes the initial transfer of a defined glycan (Glc(3)Man(9)GlcNAc(2) in eukaryotes) from the lipid carrier dolichol-pyrophosphate to an asparagine residue within an Asn-X-Ser/Thr consensus motif in nascent polypeptide chains, the first step in protein N-glycosylation. N-glycosylation occurs cotranslationally and the complex associates with the Sec61 complex at the channel-forming translocon complex that mediates protein translocation across the endoplasmic reticulum (ER). All subunits are required for a maximal enzyme activity. The sequence is that of Dolichyl-diphosphooligosaccharide--protein glycosyltransferase subunit 1 from Caenorhabditis elegans.